A 443-amino-acid polypeptide reads, in one-letter code: Zinc finger protein ZIC 1 (443 aa).

The C2H2-type 1; atypical zinc finger occupies 221–256 (LICKWIEPEQLANPKKSCNKTFSTMHELVTHVTVEH). The C2H2-type 2; atypical zinc-finger motif lies at 265 to 292 (HICVWEECPREGKPFKAKYKLINHIRVH). C2H2-type zinc fingers lie at residues 298 to 322 (FPCPFPGCGKVFARSENLKIHKRTH), 328 to 352 (FKCEFEGCDRRFANSSDRKKHMHVH), and 358 to 380 (YLCKMCDKSYTHPSSLRKHMKVH). The disordered stretch occupies residues 371-433 (SSLRKHMKVH…AVHHTSNHST (63 aa)). Over residues 383–396 (SSQGSQPSPAASSG) the composition is skewed to low complexity. Positions 397–413 (YESSTPPTIVSPSAENQ) are enriched in polar residues. Residues 408–443 (PSAENQSTSSLSPSSSAVHHTSNHSTLSSNFNEWYV) form a negatively regulates transcriptional activity region. Over residues 414–433 (STSSLSPSSSAVHHTSNHST) the composition is skewed to low complexity.

It belongs to the GLI C2H2-type zinc-finger protein family. During early gastrula stages, widely expressed in the dorsal ectoderm. At mid-gastrula, expressed throughout the presumptive neural plate and at late gastrula, expression gradually diminishes in the dorsal midline and increases in the anterior folds. By early neurula stage, expression becomes restricted to the lateral edges of the neural plate, corresponding to the presumptive dorsal neural plate and neural crest, and in flanking ectoderm. In early tailbud stages (stages 22-23), expressed in the dorsal forebrain, midbrain and hindbrain. Subsequently expressed in the telencephalon and at the diencephalon/mesencephalon boundary. In the spinal cord, expression is restricted to the dorsal most region including the roof plate. Also expressed in the somites but not in eye vesicles. At larval stages, expressed mainly in the dorsal neural tube throughout its anteroposterior axis.

It localises to the nucleus. The protein localises to the cytoplasm. Functionally, transcriptional activator that induces expression of multiple genes including pax3, en2, snai2/slug, feb and a subset of wnt genes. Has multiple key roles in the regulation of neural induction and neurogenesis: acts as a neural competence factor, sensitizing the presumptive neuroectoderm to respond to subsequent neuralizing signals. Promotes both preplacodal cell fates and neural crest cell fates, two of the cell populations that arise from the neural plate border. Cooperates with pax3 in concert with wnt signaling to determine neural crest fate. Synergizes with the bmp-inhibitor noggin/nog and acts through the wnt pathway to induce expression of en2. May bind to the minimal GLI-consensus sequence 5'-TGGGTGGTC-3'. This Xenopus laevis (African clawed frog) protein is Zinc finger protein ZIC 1 (zic1).